Reading from the N-terminus, the 368-residue chain is MDNNNDFWKFSDQLRLESGLANLSLNDYSIWSNSYSSKRPDQRRNFDVKGSDFNNNNNSSKAFDDDFNDGWKITNSNGPLFSMPHNNNNNTLEVGGFNKGGGIYSNTNTTISSYHPNNLNNNAFGGFNKGIYSNTTSSPYLNNNHHHLDDNNNLNRNNLKGYKTYFKGEDQFHTPKSAKKKNTTNNTNNKKHGDNTNNNDGTKTGAEKKFKTLPPSESLPKNETIGGYIFVCNNDTMAENLQRQLFGLPPRYRDSVRTITPGLPIFLYNYSTHQLHGIFEAASFGGSNIDPTAWEDKKCPGESRFPAQVQVITRKVCEPLEEDSFRPILHHYDGPKFRLELSVPEALSLLDIFANQNSFDDIFKAIPA.

2 disordered regions span residues 35-61 (YSSKRPDQRRNFDVKGSDFNNNNNSSK) and 171-218 (QFHT…PSES). Residues 38–50 (KRPDQRRNFDVKG) show a composition bias toward basic and acidic residues. The span at 52 to 61 (DFNNNNNSSK) shows a compositional bias: polar residues. The segment covering 195-204 (NTNNNDGTKT) has biased composition (low complexity). A DCD domain is found at 223 to 355 (ETIGGYIFVC…ALSLLDIFAN (133 aa)).

The protein localises to the cytoplasm. Functionally, involved in stress signaling pathway that mediates cell death in response to endoplasmic reticulum (ER) stress and osmotic stress. In Glycine max (Soybean), this protein is DCD domain-containing protein NRP-A.